The sequence spans 315 residues: tRNA dimethylallyltransferase (315 aa).

14-21 contributes to the ATP binding site; sequence GATATGKS. 16-21 lines the substrate pocket; that stretch reads TATGKS. An interaction with substrate tRNA region spans residues 39–42; that stretch reads DSRQ.

It belongs to the IPP transferase family. In terms of assembly, monomer. Requires Mg(2+) as cofactor.

It catalyses the reaction adenosine(37) in tRNA + dimethylallyl diphosphate = N(6)-dimethylallyladenosine(37) in tRNA + diphosphate. In terms of biological role, catalyzes the transfer of a dimethylallyl group onto the adenine at position 37 in tRNAs that read codons beginning with uridine, leading to the formation of N6-(dimethylallyl)adenosine (i(6)A). The chain is tRNA dimethylallyltransferase from Microcystis aeruginosa (strain NIES-843 / IAM M-2473).